A 110-amino-acid chain; its full sequence is RNA silencing suppressor (110 aa).

The interval 50–53 (RRRR) is basic. Residues 60–81 (CERCYRVYPPLPFSKKCDNRTC) form a C4-type zinc finger.

This sequence belongs to the carlaviruses nucleic acid-binding protein family.

Suppressor of viral-induced RNA silencing. The potential mechanism of action is based on sequestering siRNAs. The chain is RNA silencing suppressor from Helenium virus S (HelVS).